A 677-amino-acid chain; its full sequence is Collagen alpha-2(IX) chain (677 aa).

The first 21 residues, 1 to 21 (MAHRSPALCLLLLHAACLCLA), serve as a signal peptide directing secretion. Positions 25-161 (GPPGEPGPRG…PGKPGPPGHI (137 aa)) are triple-helical region 4 (COL4). Pro residues predominate over residues 28–41 (GEPGPRGPPGPPGV). Residues 28-516 (GEPGPRGPPG…MPGQRGVAGR (489 aa)) form a disordered region. Residues 53-66 (SPGAPGSPGAKGEP) are compositionally biased toward low complexity. The segment covering 68-77 (APGPDGPPGK) has biased composition (pro residues). The span at 91 to 100 (GPWGGQGLKG) shows a compositional bias: gly residues. Composition is skewed to pro residues over residues 104-121 (LPGP…PPGL) and 137-158 (KGDP…PGPP). 4-hydroxyproline is present on P158. A nonhelical region 4 (NC4) region spans residues 162 to 178 (QGVEGSADFLCPTNCPP). O-linked (Xyl...) (glycosaminoglycan) serine glycosylation is present at S167. A 4-hydroxyproline modification is found at P178. The segment at 179–517 (GPKGPQGLQG…PGQRGVAGRD (339 aa)) is triple-helical region 3 (COL3). K181 is subject to 5-hydroxylysine. O-linked (Gal...) hydroxylysine glycosylation occurs at K181. K190 carries the post-translational modification Allysine. 3 stretches are compositionally biased toward low complexity: residues 363–382 (TPGL…AGVP), 430–442 (PGKT…TGDP), and 496–505 (RGLLGERGVP). The interval 518–547 (AGDQHIIDVVLKMMQEQLAEVAVSAKRAAL) is nonhelical region 3 (NC3). Positions 548-630 (GGVGAMGPPG…PGLPGIPGHA (83 aa)) are triple-helical region 2 (COL2). A disordered region spans residues 550 to 657 (VGAMGPPGPP…GRPGSPGPAG (108 aa)). Pro residues predominate over residues 555–565 (PPGPPGPPGPP). The span at 597–609 (KRGEKGERGDTGR) shows a compositional bias: basic and acidic residues. The nonhelical region 2 (NC2) stretch occupies residues 631–632 (LA). Residues 633–662 (GKDGERGPPGVPGDAGRPGSPGPAGLPGFC) are triple-helical region 1 (COL1). Residues 663 to 677 (EPAACLGALPTPRHG) are nonhelical region 1 (NC1).

Belongs to the fibril-associated collagens with interrupted helices (FACIT) family. As to quaternary structure, heterotrimer of an alpha 1(IX), an alpha 2(IX) and an alpha 3(IX) chain. The chains are linked to each other by interchain disulfide bonds. Trimers are also cross-linked via hydroxylysines. Post-translationally, covalently linked to the telopeptides of type II collagen by lysine-derived cross-links. In terms of processing, prolines at the third position of the tripeptide repeating unit (G-X-Y) are hydroxylated in some or all of the chains.

The protein localises to the secreted. It is found in the extracellular space. It localises to the extracellular matrix. Its function is as follows. Structural component of hyaline cartilage and vitreous of the eye. The chain is Collagen alpha-2(IX) chain (COL9A2) from Gallus gallus (Chicken).